We begin with the raw amino-acid sequence, 323 residues long: Acetyl-coenzyme A carboxylase carboxyl transferase subunit alpha (323 aa).

The CoA carboxyltransferase C-terminal domain occupies 39-293 (RLSKKSQQLT…RRALADSLRQ (255 aa)).

This sequence belongs to the AccA family. In terms of assembly, acetyl-CoA carboxylase is a heterohexamer composed of biotin carboxyl carrier protein (AccB), biotin carboxylase (AccC) and two subunits each of ACCase subunit alpha (AccA) and ACCase subunit beta (AccD).

The protein localises to the cytoplasm. It carries out the reaction N(6)-carboxybiotinyl-L-lysyl-[protein] + acetyl-CoA = N(6)-biotinyl-L-lysyl-[protein] + malonyl-CoA. The protein operates within lipid metabolism; malonyl-CoA biosynthesis; malonyl-CoA from acetyl-CoA: step 1/1. Component of the acetyl coenzyme A carboxylase (ACC) complex. First, biotin carboxylase catalyzes the carboxylation of biotin on its carrier protein (BCCP) and then the CO(2) group is transferred by the carboxyltransferase to acetyl-CoA to form malonyl-CoA. This is Acetyl-coenzyme A carboxylase carboxyl transferase subunit alpha from Burkholderia vietnamiensis (strain G4 / LMG 22486) (Burkholderia cepacia (strain R1808)).